The primary structure comprises 206 residues: Guanylate kinase (206 aa).

The Guanylate kinase-like domain occupies 7–185 (GLLIVISGPS…AVEKIRAIII (179 aa)). 14–21 (GPSGAGKG) serves as a coordination point for ATP.

This sequence belongs to the guanylate kinase family.

The protein resides in the cytoplasm. The enzyme catalyses GMP + ATP = GDP + ADP. Functionally, essential for recycling GMP and indirectly, cGMP. The chain is Guanylate kinase from Caldanaerobacter subterraneus subsp. tengcongensis (strain DSM 15242 / JCM 11007 / NBRC 100824 / MB4) (Thermoanaerobacter tengcongensis).